Here is a 200-residue protein sequence, read N- to C-terminus: Large ribosomal subunit protein uL4 (200 aa).

The tract at residues 38–67 is disordered; it reads GRQGSKAQKTRSEVSGGGKKPWRQKGTGRA.

Belongs to the universal ribosomal protein uL4 family. Part of the 50S ribosomal subunit.

Its function is as follows. One of the primary rRNA binding proteins, this protein initially binds near the 5'-end of the 23S rRNA. It is important during the early stages of 50S assembly. It makes multiple contacts with different domains of the 23S rRNA in the assembled 50S subunit and ribosome. Functionally, forms part of the polypeptide exit tunnel. The protein is Large ribosomal subunit protein uL4 of Pseudomonas paraeruginosa (strain DSM 24068 / PA7) (Pseudomonas aeruginosa (strain PA7)).